A 39-amino-acid chain; its full sequence is ILECVFSCDIKKEGKPCKPKGEKKCTGGWRCKIKLCLKI.

3 disulfide bridges follow: Cys-4–Cys-25, Cys-8–Cys-31, and Cys-17–Cys-36.

This sequence belongs to the neurotoxin 12 (Hwtx-2) family. 06 (TXP1) subfamily. As to expression, expressed by the venom gland.

The protein localises to the secreted. Inhibits voltage-gated calcium channels (Cav) in rat cerebellar granule cells. Has insecticidal activity to crickets (Acheta domesticus). Is not toxic to mice. This Brachypelma albiceps (Mexican golden redrump tarantula) protein is Omega-theraphotoxin-Ba1a.